Consider the following 500-residue polypeptide: L-arabinose isomerase (500 aa).

Mn(2+)-binding residues include E306, E333, H350, and H450.

This sequence belongs to the arabinose isomerase family. In terms of assembly, homohexamer. The cofactor is Mn(2+).

It carries out the reaction beta-L-arabinopyranose = L-ribulose. Its pathway is carbohydrate degradation; L-arabinose degradation via L-ribulose; D-xylulose 5-phosphate from L-arabinose (bacterial route): step 1/3. Functionally, catalyzes the conversion of L-arabinose to L-ribulose. In Escherichia coli O6:H1 (strain CFT073 / ATCC 700928 / UPEC), this protein is L-arabinose isomerase.